The sequence spans 799 residues: Phenylalanine--tRNA ligase beta subunit (799 aa).

Positions 39–150 (GKGFSGVIVG…EHLQAGTALN (112 aa)) constitute a tRNA-binding domain. One can recognise a B5 domain in the interval 402–478 (FLELTIRCRL…RIYGYDHIPR (77 aa)). Positions 456, 462, 465, and 466 each coordinate Mg(2+). The FDX-ACB domain maps to 705–798 (AIYPGSERDW…VSQKFANDLK (94 aa)).

The protein belongs to the phenylalanyl-tRNA synthetase beta subunit family. Type 1 subfamily. As to quaternary structure, tetramer of two alpha and two beta subunits. Mg(2+) is required as a cofactor.

The protein localises to the cytoplasm. The catalysed reaction is tRNA(Phe) + L-phenylalanine + ATP = L-phenylalanyl-tRNA(Phe) + AMP + diphosphate + H(+). The protein is Phenylalanine--tRNA ligase beta subunit of Protochlamydia amoebophila (strain UWE25).